The sequence spans 156 residues: Small ribosomal subunit protein uS7 (156 aa).

This sequence belongs to the universal ribosomal protein uS7 family. As to quaternary structure, part of the 30S ribosomal subunit. Contacts proteins S9 and S11.

Its function is as follows. One of the primary rRNA binding proteins, it binds directly to 16S rRNA where it nucleates assembly of the head domain of the 30S subunit. Is located at the subunit interface close to the decoding center, probably blocks exit of the E-site tRNA. The sequence is that of Small ribosomal subunit protein uS7 from Streptococcus pyogenes serotype M1.